We begin with the raw amino-acid sequence, 415 residues long: Plasminogen activator inhibitor 2 (415 aa).

A disulfide bridge connects residues Cys5 and Cys405. N-linked (GlcNAc...) asparagine glycans are attached at residues Asn75, Asn115, and Asn339.

The protein belongs to the serpin family. Ov-serpin subfamily. Interacts with PSMB1. In terms of processing, the signal sequence is not cleaved.

It is found in the cytoplasm. The protein localises to the secreted. It localises to the extracellular space. Functionally, inhibits urokinase-type plasminogen activator. The monocyte derived PAI-2 is distinct from the endothelial cell-derived PAI-1. The protein is Plasminogen activator inhibitor 2 (SERPINB2) of Homo sapiens (Human).